A 482-amino-acid polypeptide reads, in one-letter code: G patch domain-containing protein 2-like (482 aa).

Phosphoserine occurs at positions 31, 86, and 88. The residue at position 91 (threonine 91) is a Phosphothreonine. Disordered regions lie at residues 195 to 222 (SQPG…SECD) and 408 to 482 (KRKR…TNGC). Positions 198–215 (GRKERMECEAEEQKHGSD) are enriched in basic and acidic residues. The span at 414 to 427 (VASASFSSPSPVHP) shows a compositional bias: low complexity. Residues 468-482 (EKNSGCSSSPGTNGC) are compositionally biased toward polar residues.

The sequence is that of G patch domain-containing protein 2-like (Gpatch2l) from Mus musculus (Mouse).